Reading from the N-terminus, the 468-residue chain is Glutamate--tRNA ligase (468 aa).

Residues 14-24 (PSPTGFIHLGN) carry the 'HIGH' region motif. Positions 246 to 250 (KMSKR) match the 'KMSKS' region motif. Lys-249 lines the ATP pocket.

It belongs to the class-I aminoacyl-tRNA synthetase family. Glutamate--tRNA ligase type 1 subfamily. As to quaternary structure, monomer.

The protein localises to the cytoplasm. The catalysed reaction is tRNA(Glu) + L-glutamate + ATP = L-glutamyl-tRNA(Glu) + AMP + diphosphate. Its function is as follows. Catalyzes the attachment of glutamate to tRNA(Glu) in a two-step reaction: glutamate is first activated by ATP to form Glu-AMP and then transferred to the acceptor end of tRNA(Glu). This is Glutamate--tRNA ligase from Leptothrix cholodnii (strain ATCC 51168 / LMG 8142 / SP-6) (Leptothrix discophora (strain SP-6)).